A 364-amino-acid polypeptide reads, in one-letter code: UDP-N-acetylglucosamine--N-acetylmuramyl-(pentapeptide) pyrophosphoryl-undecaprenol N-acetylglucosamine transferase (364 aa).

UDP-N-acetyl-alpha-D-glucosamine contacts are provided by residues 10-12, Asn124, Ser195, Ile250, and Gln295; that span reads TGG.

It belongs to the glycosyltransferase 28 family. MurG subfamily.

It localises to the cell membrane. The catalysed reaction is Mur2Ac(oyl-L-Ala-gamma-D-Glu-L-Lys-D-Ala-D-Ala)-di-trans,octa-cis-undecaprenyl diphosphate + UDP-N-acetyl-alpha-D-glucosamine = beta-D-GlcNAc-(1-&gt;4)-Mur2Ac(oyl-L-Ala-gamma-D-Glu-L-Lys-D-Ala-D-Ala)-di-trans,octa-cis-undecaprenyl diphosphate + UDP + H(+). The protein operates within cell wall biogenesis; peptidoglycan biosynthesis. Functionally, cell wall formation. Catalyzes the transfer of a GlcNAc subunit on undecaprenyl-pyrophosphoryl-MurNAc-pentapeptide (lipid intermediate I) to form undecaprenyl-pyrophosphoryl-MurNAc-(pentapeptide)GlcNAc (lipid intermediate II). The sequence is that of UDP-N-acetylglucosamine--N-acetylmuramyl-(pentapeptide) pyrophosphoryl-undecaprenol N-acetylglucosamine transferase from Levilactobacillus brevis (strain ATCC 367 / BCRC 12310 / CIP 105137 / JCM 1170 / LMG 11437 / NCIMB 947 / NCTC 947) (Lactobacillus brevis).